Consider the following 453-residue polypeptide: Allantoinase (453 aa).

Zn(2+)-binding residues include His-59, His-61, Lys-146, His-186, His-242, and Asp-315. Position 146 is an N6-carboxylysine (Lys-146).

The protein belongs to the metallo-dependent hydrolases superfamily. Allantoinase family. In terms of assembly, homotetramer. It depends on Zn(2+) as a cofactor. In terms of processing, carboxylation allows a single lysine to coordinate two zinc ions.

It catalyses the reaction (S)-allantoin + H2O = allantoate + H(+). It functions in the pathway nitrogen metabolism; (S)-allantoin degradation; allantoate from (S)-allantoin: step 1/1. In terms of biological role, catalyzes the conversion of allantoin (5-ureidohydantoin) to allantoic acid by hydrolytic cleavage of the five-member hydantoin ring. The sequence is that of Allantoinase from Escherichia coli (strain SMS-3-5 / SECEC).